We begin with the raw amino-acid sequence, 224 residues long: Thiamine-phosphate synthase (224 aa).

4-amino-2-methyl-5-(diphosphooxymethyl)pyrimidine contacts are provided by residues 41-45 (QFRDK) and aspartate 77. 2 residues coordinate Mg(2+): aspartate 78 and aspartate 97. Serine 116 serves as a coordination point for 4-amino-2-methyl-5-(diphosphooxymethyl)pyrimidine. A 2-[(2R,5Z)-2-carboxy-4-methylthiazol-5(2H)-ylidene]ethyl phosphate-binding site is contributed by 143–145 (TNS). Lysine 146 contributes to the 4-amino-2-methyl-5-(diphosphooxymethyl)pyrimidine binding site. 2-[(2R,5Z)-2-carboxy-4-methylthiazol-5(2H)-ylidene]ethyl phosphate-binding positions include glycine 174 and 194 to 195 (IS).

This sequence belongs to the thiamine-phosphate synthase family. The cofactor is Mg(2+).

It catalyses the reaction 2-[(2R,5Z)-2-carboxy-4-methylthiazol-5(2H)-ylidene]ethyl phosphate + 4-amino-2-methyl-5-(diphosphooxymethyl)pyrimidine + 2 H(+) = thiamine phosphate + CO2 + diphosphate. The catalysed reaction is 2-(2-carboxy-4-methylthiazol-5-yl)ethyl phosphate + 4-amino-2-methyl-5-(diphosphooxymethyl)pyrimidine + 2 H(+) = thiamine phosphate + CO2 + diphosphate. It carries out the reaction 4-methyl-5-(2-phosphooxyethyl)-thiazole + 4-amino-2-methyl-5-(diphosphooxymethyl)pyrimidine + H(+) = thiamine phosphate + diphosphate. It participates in cofactor biosynthesis; thiamine diphosphate biosynthesis; thiamine phosphate from 4-amino-2-methyl-5-diphosphomethylpyrimidine and 4-methyl-5-(2-phosphoethyl)-thiazole: step 1/1. Functionally, condenses 4-methyl-5-(beta-hydroxyethyl)thiazole monophosphate (THZ-P) and 2-methyl-4-amino-5-hydroxymethyl pyrimidine pyrophosphate (HMP-PP) to form thiamine monophosphate (TMP). The polypeptide is Thiamine-phosphate synthase (Latilactobacillus sakei subsp. sakei (strain 23K) (Lactobacillus sakei subsp. sakei)).